The primary structure comprises 433 residues: Histidinol dehydrogenase 2 (433 aa).

NAD(+)-binding residues include Tyr130, Gln192, and Asn215. The substrate site is built by Ser238, Gln260, and His263. Residues Gln260 and His263 each contribute to the Zn(2+) site. Catalysis depends on proton acceptor residues Glu328 and His329. Substrate is bound by residues His329, Asp362, Glu416, and His421. A Zn(2+)-binding site is contributed by Asp362. A Zn(2+)-binding site is contributed by His421.

Belongs to the histidinol dehydrogenase family. Zn(2+) serves as cofactor.

The catalysed reaction is L-histidinol + 2 NAD(+) + H2O = L-histidine + 2 NADH + 3 H(+). It functions in the pathway amino-acid biosynthesis; L-histidine biosynthesis; L-histidine from 5-phospho-alpha-D-ribose 1-diphosphate: step 9/9. Catalyzes the sequential NAD-dependent oxidations of L-histidinol to L-histidinaldehyde and then to L-histidine. This is Histidinol dehydrogenase 2 (hisD2) from Nostoc sp. (strain PCC 7120 / SAG 25.82 / UTEX 2576).